A 44-amino-acid chain; its full sequence is MKRTLGGTTRKRQKTSGFRARMRTASGRRVLSARRRRGRHRLAV.

Composition is skewed to basic residues over residues 1–14 and 31–44; these read MKRTLGGTTRKRQK and LSARRRRGRHRLAV. Residues 1 to 44 are disordered; it reads MKRTLGGTTRKRQKTSGFRARMRTASGRRVLSARRRRGRHRLAV.

This sequence belongs to the bacterial ribosomal protein bL34 family.

In Gloeobacter violaceus (strain ATCC 29082 / PCC 7421), this protein is Large ribosomal subunit protein bL34.